Reading from the N-terminus, the 1163-residue chain is Guanylate cyclase 32E (1163 aa).

The first 25 residues, 1–25 (MPGPCASAAAFSCILVLLLLGCQRS), serve as a signal peptide directing secretion. The Extracellular portion of the chain corresponds to 29-469 (AAGATVSSMR…LCPRKKLDWR (441 aa)). N-linked (GlcNAc...) asparagine glycans are attached at residues asparagine 147, asparagine 206, asparagine 368, and asparagine 390. A helical membrane pass occupies residues 470-490 (YLVSGPLCALVVVVAIALLIK). Residues 491-1163 (HYRYEQTLAG…RSAPSITFRL (673 aa)) are Cytoplasmic-facing. Residues 507 to 800 (MKDVTVINLG…IRLVRMHLKE (294 aa)) form the Protein kinase domain. Residues 873 to 1003 (TILFSDIVGF…DTVNTASRME (131 aa)) enclose the Guanylate cyclase domain.

Belongs to the adenylyl cyclase class-4/guanylyl cyclase family.

It localises to the membrane. The enzyme catalyses GTP = 3',5'-cyclic GMP + diphosphate. This chain is Guanylate cyclase 32E (Gyc32E), found in Drosophila melanogaster (Fruit fly).